Reading from the N-terminus, the 296-residue chain is MTDATSGSDPDSTTPVDLTGEDFRDPDALRRRAGVSGDPNFDQHFLIDDRVLDRIPTYLLDSTDTTHILEIGAGTGALTDRLLAVGDTVTVIERDATLAAFLREEFAVMIDDGRLNIIEGDALEVTLPAFTTCISNLPYGISSEILFELLPADCPLIVMVQREFGERMAADPGTDAYGRLSVSAQHYATVEVVETVPPTAFAPEPAVDSALIRAEPRDPDYTVTDETFFLRFVKAVFTQRRKTVRNAIRNTAHISMLDTPDAVVNAADEALLSQRAGDLTPSEFAELATIAAEKGK.

Residues 1–16 (MTDATSGSDPDSTTPV) show a composition bias toward polar residues. A disordered region spans residues 1–25 (MTDATSGSDPDSTTPVDLTGEDFRD). S-adenosyl-L-methionine is bound by residues His44, Leu46, Gly72, Glu93, Asp121, and Asn136.

The protein belongs to the class I-like SAM-binding methyltransferase superfamily. rRNA adenine N(6)-methyltransferase family. RsmA subfamily.

The protein localises to the cytoplasm. Specifically dimethylates two adjacent adenosines in the loop of a conserved hairpin near the 3'-end of 16S rRNA in the 30S particle. May play a critical role in biogenesis of 30S subunits. The polypeptide is Probable ribosomal RNA small subunit methyltransferase A (Haloquadratum walsbyi (strain DSM 16790 / HBSQ001)).